A 173-amino-acid polypeptide reads, in one-letter code: Adenine phosphoribosyltransferase (173 aa).

The protein belongs to the purine/pyrimidine phosphoribosyltransferase family. Homodimer.

Its subcellular location is the cytoplasm. It carries out the reaction AMP + diphosphate = 5-phospho-alpha-D-ribose 1-diphosphate + adenine. Its pathway is purine metabolism; AMP biosynthesis via salvage pathway; AMP from adenine: step 1/1. Catalyzes a salvage reaction resulting in the formation of AMP, that is energically less costly than de novo synthesis. The sequence is that of Adenine phosphoribosyltransferase from Thermoanaerobacter sp. (strain X514).